The primary structure comprises 383 residues: Adaptive-response sensory kinase SasA (383 aa).

A Histidine kinase domain is found at 161-383 (MLAHDLRSPL…SFHFTLPVYR (223 aa)). His-164 is modified (phosphohistidine; by autocatalysis).

As to quaternary structure, homooligomerizes. Interacts with KaiC1. Interacts with KaiC1 and RpaA. Binds to the B-loop in the CI domain of KaiC; SasA and KaiB compete to bind to the CI domain.

It carries out the reaction ATP + protein L-histidine = ADP + protein N-phospho-L-histidine.. Member of the two-component regulatory system SasA/RpaA involved in genome-wide circadian gene expression. One of several clock output pathways. Participates in the Kai clock protein complex, the main circadian regulator in cyanobacteria, via its interaction with KaiC. KaiC enhances the autophosphorylation activity of SasA, which then transfers its phosphate group to RpaA to activate it. In addition to its output function, recruits fold-shifted KaiB (KaiB(fs)) to KaiC to cooperatively form the KaiB(6):KaiC(6) complex (independent of SasA kinase activity). Required for robustness of the circadian rhythm of gene expression and is involved in clock output, also required for adaptation to light/dark cycles. Functionally, plays an important role in glucose metabolism, important for expression of genes involved in glycolysis, gluconeogenesis, the oxidative pentose phosphate pathway, and glycogen metabolism. Required for heterotrophic growth. Overexpression from the psbAII promoter leads to altered levels of genes involved in carbon metabolism, increased levels of transcripts for clock oscillator genes in the light and the dark, complete loss of glycogen accumulation, decreased levels of metabolites of sugar catabolism and increased levels of amino acids in the light and increased levels of SigE protein. In Synechocystis sp. (strain ATCC 27184 / PCC 6803 / Kazusa), this protein is Adaptive-response sensory kinase SasA.